The following is a 60-amino-acid chain: Small ribosomal subunit protein bS21 (60 aa).

Residues Pro41–Arg60 are disordered. The span at Arg45–Arg60 shows a compositional bias: basic residues.

This sequence belongs to the bacterial ribosomal protein bS21 family.

This chain is Small ribosomal subunit protein bS21, found in Gloeothece citriformis (strain PCC 7424) (Cyanothece sp. (strain PCC 7424)).